The chain runs to 109 residues: Small ribosomal subunit protein bS6 (109 aa).

The protein belongs to the bacterial ribosomal protein bS6 family.

In terms of biological role, binds together with bS18 to 16S ribosomal RNA. The sequence is that of Small ribosomal subunit protein bS6 from Ehrlichia chaffeensis (strain ATCC CRL-10679 / Arkansas).